Consider the following 203-residue polypeptide: Outer-membrane lipoprotein LolB (203 aa).

An N-terminal signal peptide occupies residues 1–20; it reads MNRSRRLALLCLGVPLLLQA. C21 carries the N-palmitoyl cysteine lipid modification. C21 carries S-diacylglycerol cysteine lipidation.

It belongs to the LolB family. In terms of assembly, monomer.

The protein localises to the cell outer membrane. Its function is as follows. Plays a critical role in the incorporation of lipoproteins in the outer membrane after they are released by the LolA protein. The sequence is that of Outer-membrane lipoprotein LolB from Cupriavidus taiwanensis (strain DSM 17343 / BCRC 17206 / CCUG 44338 / CIP 107171 / LMG 19424 / R1) (Ralstonia taiwanensis (strain LMG 19424)).